The following is a 138-amino-acid chain: Acidic phospholipase A2 DsM-a2/DsM-a2' (138 aa).

The first 16 residues, M1–G16, serve as a signal peptide directing secretion. 7 disulfide bridges follow: C42/C131, C44/C60, C59/C111, C65/C138, C66/C104, C73/C97, and C91/C102. The Ca(2+) site is built by Y43, G45, and G47. Residue H63 is part of the active site. D64 serves as a coordination point for Ca(2+). Residue D105 is part of the active site.

This sequence belongs to the phospholipase A2 family. Group II subfamily. D49 sub-subfamily. Ca(2+) is required as a cofactor. As to expression, expressed by the venom gland.

The protein localises to the secreted. It catalyses the reaction a 1,2-diacyl-sn-glycero-3-phosphocholine + H2O = a 1-acyl-sn-glycero-3-phosphocholine + a fatty acid + H(+). Its function is as follows. Exhibits high hydrolytic activities and shows strong preference for the anionic micelles (dPPC with deoxycholate) to the zwitterionic micelles (dPPC with Triton X-100). PLA2 catalyzes the calcium-dependent hydrolysis of the 2-acyl groups in 3-sn-phosphoglycerides. The protein is Acidic phospholipase A2 DsM-a2/DsM-a2' of Daboia siamensis (Eastern Russel's viper).